A 256-amino-acid chain; its full sequence is L-erythrulose-1-phosphate isomerase (256 aa).

The active-site Electrophile is the H96. E169 acts as the Proton acceptor in catalysis. Residues G175 and S212 each coordinate substrate.

The protein belongs to the triosephosphate isomerase family. In terms of assembly, homodimer.

The protein resides in the cytoplasm. The catalysed reaction is L-erythrulose 1-phosphate = D-erythrulose 4-phosphate. Its pathway is carbohydrate metabolism; erythritol degradation. In terms of biological role, catalyzes the isomerization of D-erythrulose-4P to L-erythrulose-1P. The protein is L-erythrulose-1-phosphate isomerase of Brucella melitensis biotype 1 (strain ATCC 23456 / CCUG 17765 / NCTC 10094 / 16M).